Here is a 273-residue protein sequence, read N- to C-terminus: 3-methyl-2-oxobutanoate hydroxymethyltransferase (273 aa).

Residues aspartate 53 and aspartate 92 each contribute to the Mg(2+) site. Residues 53 to 54 (DS), aspartate 92, and lysine 122 each bind 3-methyl-2-oxobutanoate. Glutamate 124 provides a ligand contact to Mg(2+). Glutamate 191 functions as the Proton acceptor in the catalytic mechanism.

Belongs to the PanB family. As to quaternary structure, homodecamer; pentamer of dimers. Mg(2+) is required as a cofactor.

Its subcellular location is the cytoplasm. The catalysed reaction is 3-methyl-2-oxobutanoate + (6R)-5,10-methylene-5,6,7,8-tetrahydrofolate + H2O = 2-dehydropantoate + (6S)-5,6,7,8-tetrahydrofolate. It functions in the pathway cofactor biosynthesis; (R)-pantothenate biosynthesis; (R)-pantoate from 3-methyl-2-oxobutanoate: step 1/2. Catalyzes the reversible reaction in which hydroxymethyl group from 5,10-methylenetetrahydrofolate is transferred onto alpha-ketoisovalerate to form ketopantoate. The sequence is that of 3-methyl-2-oxobutanoate hydroxymethyltransferase from Porphyromonas gingivalis (strain ATCC 33277 / DSM 20709 / CIP 103683 / JCM 12257 / NCTC 11834 / 2561).